We begin with the raw amino-acid sequence, 410 residues long: LL-diaminopimelate aminotransferase (410 aa).

Substrate-binding residues include tyrosine 15 and glycine 42. Pyridoxal 5'-phosphate is bound by residues tyrosine 72, 108 to 109 (SK), tyrosine 132, asparagine 187, tyrosine 218, and 246 to 248 (SFS). Residues lysine 109, tyrosine 132, and asparagine 187 each coordinate substrate. The residue at position 249 (lysine 249) is an N6-(pyridoxal phosphate)lysine. Pyridoxal 5'-phosphate contacts are provided by arginine 257 and asparagine 292. Positions 292 and 388 each coordinate substrate.

Belongs to the class-I pyridoxal-phosphate-dependent aminotransferase family. LL-diaminopimelate aminotransferase subfamily. Homodimer. Pyridoxal 5'-phosphate is required as a cofactor.

The catalysed reaction is (2S,6S)-2,6-diaminopimelate + 2-oxoglutarate = (S)-2,3,4,5-tetrahydrodipicolinate + L-glutamate + H2O + H(+). The protein operates within amino-acid biosynthesis; L-lysine biosynthesis via DAP pathway; LL-2,6-diaminopimelate from (S)-tetrahydrodipicolinate (aminotransferase route): step 1/1. In terms of biological role, involved in the synthesis of meso-diaminopimelate (m-DAP or DL-DAP), required for both lysine and peptidoglycan biosynthesis. Catalyzes the direct conversion of tetrahydrodipicolinate to LL-diaminopimelate. This chain is LL-diaminopimelate aminotransferase, found in Thermosynechococcus vestitus (strain NIES-2133 / IAM M-273 / BP-1).